Consider the following 204-residue polypeptide: Holliday junction branch migration complex subunit RuvA (204 aa).

Residues 1–65 (MIGRLRGAVA…SAGLRLYGFG (65 aa)) form a domain I region. The tract at residues 66 to 142 (TREDRRAFVL…PITDGPVLMT (77 aa)) is domain II. The interval 143 to 152 (APGAVAAAPA) is flexible linker. Residues 152-204 (AKAAPTGDAVAALMGLGVAEVNARRVVEAAAAKLGDEATVQALIKAGLQELGR) form a domain III region.

The protein belongs to the RuvA family. In terms of assembly, homotetramer. Forms an RuvA(8)-RuvB(12)-Holliday junction (HJ) complex. HJ DNA is sandwiched between 2 RuvA tetramers; dsDNA enters through RuvA and exits via RuvB. An RuvB hexamer assembles on each DNA strand where it exits the tetramer. Each RuvB hexamer is contacted by two RuvA subunits (via domain III) on 2 adjacent RuvB subunits; this complex drives branch migration. In the full resolvosome a probable DNA-RuvA(4)-RuvB(12)-RuvC(2) complex forms which resolves the HJ.

Its subcellular location is the cytoplasm. Functionally, the RuvA-RuvB-RuvC complex processes Holliday junction (HJ) DNA during genetic recombination and DNA repair, while the RuvA-RuvB complex plays an important role in the rescue of blocked DNA replication forks via replication fork reversal (RFR). RuvA specifically binds to HJ cruciform DNA, conferring on it an open structure. The RuvB hexamer acts as an ATP-dependent pump, pulling dsDNA into and through the RuvAB complex. HJ branch migration allows RuvC to scan DNA until it finds its consensus sequence, where it cleaves and resolves the cruciform DNA. The chain is Holliday junction branch migration complex subunit RuvA from Caulobacter sp. (strain K31).